The chain runs to 169 residues: Disulfide bond formation protein B 1 (169 aa).

At 1 to 14 (MSDDRLGLGRERRF) the chain is on the cytoplasmic side. Residues 15 to 31 (LVLLGIICLALIGGALY) traverse the membrane as a helical segment. At 32–49 (MQVVLGEAPCPLCILQRY) the chain is on the periplasmic side. An intrachain disulfide couples C41 to C44. Residues 50 to 64 (ALLLIALFAFIGAAM) form a helical membrane-spanning segment. Over 65-71 (SSRRGVT) the chain is Cytoplasmic. A helical membrane pass occupies residues 72–89 (VMETLVVICALAGAGVAG). Topologically, residues 90 to 144 (HHVYTQFYPSVSCGIDVLQPIVDSLPLAKIFPLGFQVDGFCSTPYPPILGLSLAQ) are periplasmic. Cysteines 102 and 130 form a disulfide. Residues 145-163 (WALVAFVLTVILVPLGVVR) form a helical membrane-spanning segment. Over 164–169 (NRKKTY) the chain is Cytoplasmic.

This sequence belongs to the DsbB family.

It localises to the cell inner membrane. Functionally, required for disulfide bond formation in some periplasmic proteins. Acts by oxidizing the DsbA protein. In Pseudomonas fluorescens (strain ATCC BAA-477 / NRRL B-23932 / Pf-5), this protein is Disulfide bond formation protein B 1.